A 183-amino-acid chain; its full sequence is PLAT domain-containing protein 2 (183 aa).

The signal sequence occupies residues 1–25 (MMPRRDVLFLSLLLVIATVSAVALA). Residues 31–158 (CVYTFFLRTG…SPYELSAVRN (128 aa)) form the PLAT domain.

The protein resides in the endoplasmic reticulum. In terms of biological role, involved in response to abiotic stress. The sequence is that of PLAT domain-containing protein 2 from Arabidopsis thaliana (Mouse-ear cress).